Here is a 138-residue protein sequence, read N- to C-terminus: Transcription antitermination protein NusB (138 aa).

It belongs to the NusB family.

In terms of biological role, involved in transcription antitermination. Required for transcription of ribosomal RNA (rRNA) genes. Binds specifically to the boxA antiterminator sequence of the ribosomal RNA (rrn) operons. This Serratia proteamaculans (strain 568) protein is Transcription antitermination protein NusB.